The sequence spans 346 residues: Selenide, water dikinase (346 aa).

Cys15 is a catalytic residue. ATP-binding positions include Lys18 and 46–48; that span reads SKD. Asp49 provides a ligand contact to Mg(2+). ATP contacts are provided by residues Asp66, Asp89, and 137 to 139; that span reads GHS. Asp89 provides a ligand contact to Mg(2+). Asp225 contributes to the Mg(2+) binding site.

This sequence belongs to the selenophosphate synthase 1 family. Class I subfamily. As to quaternary structure, homodimer. It depends on Mg(2+) as a cofactor.

It catalyses the reaction hydrogenselenide + ATP + H2O = selenophosphate + AMP + phosphate + 2 H(+). Functionally, synthesizes selenophosphate from selenide and ATP. The protein is Selenide, water dikinase of Photobacterium profundum (strain SS9).